The sequence spans 117 residues: MQTIEIGNKAELQACKFLHTQALEILAHNFKALPYGEIDIIALDKDTLIFIEVKYRSKTKFAQAEEMLTYSKQQKLVNSASIYLQHNPQYQDYQCRFDLIAINESNINWIKNAFGVI.

The protein belongs to the UPF0102 family.

The chain is UPF0102 protein FTF0898c from Francisella tularensis subsp. tularensis (strain FSC 198).